Consider the following 185-residue polypeptide: Ribosome-recycling factor (185 aa).

It belongs to the RRF family.

Its subcellular location is the cytoplasm. Functionally, responsible for the release of ribosomes from messenger RNA at the termination of protein biosynthesis. May increase the efficiency of translation by recycling ribosomes from one round of translation to another. The sequence is that of Ribosome-recycling factor from Geobacillus kaustophilus (strain HTA426).